A 168-amino-acid polypeptide reads, in one-letter code: Crossover junction endodeoxyribonuclease RuvC (168 aa).

Catalysis depends on residues aspartate 7, glutamate 66, and aspartate 138. Residues aspartate 7, glutamate 66, and aspartate 138 each coordinate Mg(2+).

This sequence belongs to the RuvC family. Homodimer which binds Holliday junction (HJ) DNA. The HJ becomes 2-fold symmetrical on binding to RuvC with unstacked arms; it has a different conformation from HJ DNA in complex with RuvA. In the full resolvosome a probable DNA-RuvA(4)-RuvB(12)-RuvC(2) complex forms which resolves the HJ. The cofactor is Mg(2+).

The protein resides in the cytoplasm. The enzyme catalyses Endonucleolytic cleavage at a junction such as a reciprocal single-stranded crossover between two homologous DNA duplexes (Holliday junction).. Functionally, the RuvA-RuvB-RuvC complex processes Holliday junction (HJ) DNA during genetic recombination and DNA repair. Endonuclease that resolves HJ intermediates. Cleaves cruciform DNA by making single-stranded nicks across the HJ at symmetrical positions within the homologous arms, yielding a 5'-phosphate and a 3'-hydroxyl group; requires a central core of homology in the junction. The consensus cleavage sequence is 5'-(A/T)TT(C/G)-3'. Cleavage occurs on the 3'-side of the TT dinucleotide at the point of strand exchange. HJ branch migration catalyzed by RuvA-RuvB allows RuvC to scan DNA until it finds its consensus sequence, where it cleaves and resolves the cruciform DNA. This chain is Crossover junction endodeoxyribonuclease RuvC, found in Cereibacter sphaeroides (strain ATCC 17029 / ATH 2.4.9) (Rhodobacter sphaeroides).